We begin with the raw amino-acid sequence, 593 residues long: Transcriptional repressor p66-beta (593 aa).

A Phosphoserine modification is found at S17. Residues K33, K66, and K97 each participate in a glycyl lysine isopeptide (Lys-Gly) (interchain with G-Cter in SUMO2) cross-link. A disordered region spans residues 62–123 (ELPTKQDGSG…PERGRLTPSP (62 aa)). 2 stretches are compositionally biased toward basic and acidic residues: residues 74 to 100 (GYEEKLNGNLRPHGDNRTAGRPGKENI) and 108 to 118 (SARRSEPERGR). At T120 the chain carries Phosphothreonine. Phosphoserine is present on residues S122, S129, S134, and S135. A coiled-coil region spans residues 140 to 194 (SRMEERLKAANLEMFKGKGIEERQQLIKQLRDELRLEEARLVLLKKLRQSQLQKE). K147 is covalently cross-linked (Glycyl lysine isopeptide (Lys-Gly) (interchain with G-Cter in SUMO2)). Residues 165-195 (LIKQLRDELRLEEARLVLLKKLRQSQLQKEN) form a CR1; interaction with MBD2 and MBD3 region. K199 is covalently cross-linked (Glycyl lysine isopeptide (Lys-Gly) (interchain with G-Cter in SUMO2)). S208 is subject to Phosphoserine. Residues 213–235 (SPAHVGQQGLSKLPSRPGAQGVE) are disordered. Residue K281 forms a Glycyl lysine isopeptide (Lys-Gly) (interchain with G-Cter in SUMO2) linkage. S333, S338, and S340 each carry phosphoserine. Residues 340 to 480 (SAMTDAANSQ…QEQEIEQRLQ (141 aa)) form a CR2; histone tail-binding region. Glycyl lysine isopeptide (Lys-Gly) (interchain with G-Cter in SUMO2) cross-links involve residues K353, K454, and K467. The GATA-type zinc-finger motif lies at 414-467 (RVEPFVCAQCRTDFTPHWKQEKNGKILCEQCMTSNQKKALKAEHTNRLKNAFVK). Positions 449-482 (QKKALKAEHTNRLKNAFVKALQQEQEIEQRLQQQ) form a coiled coil. S486 bears the Phosphoserine mark. K498 participates in a covalent cross-link: Glycyl lysine isopeptide (Lys-Gly) (interchain with G-Cter in SUMO2).

As to quaternary structure, homooligomer. Component of the nucleosome remodeling and deacetylase (NuRD) repressor complex, composed of core proteins MTA1, MTA2, MTA3, RBBP4, RBBP7, HDAC1, HDAC2, MBD2, MBD3, and peripherally associated proteins CDK2AP1, CDK2AP2, GATAD2A, GATAD2B, CHD3, CHD4 and CHD5. The exact stoichiometry of the NuRD complex is unknown, and some subunits such as MBD2 and MBD3, GATAD2A and GATAD2B, and CHD3, CHD4 and CHD5 define mutually exclusive NuRD complexes. Interacts with MBD2; this is required for the enhancement of MBD2-mediated repression and for targeting to the chromatin. Interacts with MBD3. Component of the MeCP1 histone deacetylase complex. Interacts with histone tails, including that of histones H2A, H2B, H3 and H4. Interacts with ERCC6. In terms of tissue distribution, widely expressed.

It is found in the nucleus speckle. It localises to the nucleus. The protein localises to the chromosome. In terms of biological role, transcriptional repressor. Acts as a component of the histone deacetylase NuRD complex which participates in the remodeling of chromatin. Enhances MBD2-mediated repression. Efficient repression requires the presence of GATAD2A. Targets MBD3 to discrete loci in the nucleus. May play a role in synapse development. This chain is Transcriptional repressor p66-beta (GATAD2B), found in Homo sapiens (Human).